A 274-amino-acid polypeptide reads, in one-letter code: Syntaxin-12 (274 aa).

Residues Met1 to Arg20 are disordered. Ser2 is modified (N-acetylserine). At Ser2–Lys250 the chain is on the cytoplasmic side. The stretch at Gln34 to Leu80 forms a coiled coil. Residues Glu128–Glu150 form a disordered region. A phosphoserine mark is found at Ser139, Ser142, Ser218, and Ser225. Residues Leu178 to Ala240 enclose the t-SNARE coiled-coil homology domain. The helical; Anchor for type IV membrane protein transmembrane segment at Met251–Val271 threads the bilayer. Topologically, residues Ala272 to Lys274 are vesicular.

Belongs to the syntaxin family. In terms of assembly, associates with the BLOC-1 complex. Interacts with BLOC1S6. Interacts with NAPA and SNAP23. Identified in a complex containing STX6, STX12, VAMP4 and VTI1A. Interacts with GRIPAP1. Forms a complex with GRIP1, GRIA2 and NSG1; controls the intracellular fate of AMPAR and the endosomal sorting of the GRIA2 subunit toward recycling and membrane targeting. Interacts with NSG1. Interacts with TPC1. Interacts (via N-terminus) with VPS13B. In terms of tissue distribution, ubiquitous. Highly expressed in brain.

Its subcellular location is the endosome membrane. It localises to the golgi apparatus membrane. The protein localises to the endomembrane system. The protein resides in the early endosome membrane. It is found in the recycling endosome membrane. SNARE promoting fusion of transport vesicles with target membranes. Together with SNARE STX6, promotes movement of vesicles from endosomes to the cell membrane, and may therefore function in the endocytic recycling pathway. Through complex formation with GRIP1, GRIA2 and NSG1 controls the intracellular fate of AMPAR and the endosomal sorting of the GRIA2 subunit toward recycling and membrane targeting. The sequence is that of Syntaxin-12 (Stx12) from Rattus norvegicus (Rat).